Here is a 397-residue protein sequence, read N- to C-terminus: Beta-lactamase (397 aa).

The N-terminal stretch at 1 to 26 is a signal peptide; that stretch reads MRDTRFPCLCGIAASTLLFATTPAIA. Residue serine 90 is the Acyl-ester intermediate of the active site. 5 residues coordinate a beta-lactam: serine 90, glutamine 146, tyrosine 177, asparagine 179, and asparagine 370. Tyrosine 177 serves as the catalytic Proton acceptor.

The protein belongs to the class-C beta-lactamase family. Monomer.

It localises to the periplasm. The catalysed reaction is a beta-lactam + H2O = a substituted beta-amino acid. Its function is as follows. Class C beta-lactamase which confers resistance to penicillins and cephalosporins. Has nitrocefin-hydrolyzing activity. In Pseudomonas aeruginosa (strain ATCC 15692 / DSM 22644 / CIP 104116 / JCM 14847 / LMG 12228 / 1C / PRS 101 / PAO1), this protein is Beta-lactamase (ampC).